The chain runs to 633 residues: DNA mismatch repair protein MutL (633 aa).

Belongs to the DNA mismatch repair MutL/HexB family.

This protein is involved in the repair of mismatches in DNA. It is required for dam-dependent methyl-directed DNA mismatch repair. May act as a 'molecular matchmaker', a protein that promotes the formation of a stable complex between two or more DNA-binding proteins in an ATP-dependent manner without itself being part of a final effector complex. This Bacillus pumilus (strain SAFR-032) protein is DNA mismatch repair protein MutL.